We begin with the raw amino-acid sequence, 67 residues long: DNA-directed RNA polymerase subunit omega (67 aa).

The protein belongs to the RNA polymerase subunit omega family. The RNAP catalytic core consists of 2 alpha, 1 beta, 1 beta' and 1 omega subunit. When a sigma factor is associated with the core the holoenzyme is formed, which can initiate transcription.

The catalysed reaction is RNA(n) + a ribonucleoside 5'-triphosphate = RNA(n+1) + diphosphate. Functionally, promotes RNA polymerase assembly. Latches the N- and C-terminal regions of the beta' subunit thereby facilitating its interaction with the beta and alpha subunits. The sequence is that of DNA-directed RNA polymerase subunit omega from Polaromonas sp. (strain JS666 / ATCC BAA-500).